The primary structure comprises 138 residues: Acyl carrier protein 1, chloroplastic (138 aa).

The transit peptide at 1–56 (MASLSATTTVRVQPSSSSLHKLSQGNGRCSSIVCLDWGKSSFPTLRTSRRRSFISA) directs the protein to the chloroplast. The 76-residue stretch at 59–134 (KETIDKVCDI…QAADVIESLL (76 aa)) folds into the Carrier domain. An O-(pantetheine 4'-phosphoryl)serine modification is found at Ser-94.

Belongs to the acyl carrier protein (ACP) family. 4'-phosphopantetheine is transferred from CoA to a specific serine of apo-ACP by acpS. This modification is essential for activity because fatty acids are bound in thioester linkage to the sulfhydryl of the prosthetic group.

The protein localises to the plastid. Its subcellular location is the chloroplast. It participates in lipid metabolism; fatty acid biosynthesis. In terms of biological role, carrier of the growing fatty acid chain in fatty acid biosynthesis. This is Acyl carrier protein 1, chloroplastic (ACL1.1) from Spinacia oleracea (Spinach).